We begin with the raw amino-acid sequence, 549 residues long: Maturase K (549 aa).

Belongs to the intron maturase 2 family. MatK subfamily.

The protein resides in the plastid. It localises to the chloroplast. Its function is as follows. Usually encoded in the trnK tRNA gene intron. Probably assists in splicing its own and other chloroplast group II introns. The chain is Maturase K from Albidella oligococca (Caldesia oligococca).